A 435-amino-acid chain; its full sequence is Light-independent protochlorophyllide reductase subunit N (435 aa).

[4Fe-4S] cluster contacts are provided by cysteine 23, cysteine 48, and cysteine 108.

It belongs to the BchN/ChlN family. In terms of assembly, protochlorophyllide reductase is composed of three subunits; ChlL, ChlN and ChlB. Forms a heterotetramer of two ChlB and two ChlN subunits. It depends on [4Fe-4S] cluster as a cofactor.

Its subcellular location is the plastid. It localises to the chloroplast. It catalyses the reaction chlorophyllide a + oxidized 2[4Fe-4S]-[ferredoxin] + 2 ADP + 2 phosphate = protochlorophyllide a + reduced 2[4Fe-4S]-[ferredoxin] + 2 ATP + 2 H2O. The protein operates within porphyrin-containing compound metabolism; chlorophyll biosynthesis (light-independent). Functionally, component of the dark-operative protochlorophyllide reductase (DPOR) that uses Mg-ATP and reduced ferredoxin to reduce ring D of protochlorophyllide (Pchlide) to form chlorophyllide a (Chlide). This reaction is light-independent. The NB-protein (ChlN-ChlB) is the catalytic component of the complex. This Chlorella vulgaris (Green alga) protein is Light-independent protochlorophyllide reductase subunit N.